We begin with the raw amino-acid sequence, 205 residues long: Urease accessory protein UreE (205 aa).

Positions 171 to 205 (AHEAHPHAHSHAGGHGHVHSGHGHGGKHGEHDAES) are disordered. Basic residues predominate over residues 177–196 (HAHSHAGGHGHVHSGHGHGG).

It belongs to the UreE family.

It is found in the cytoplasm. In terms of biological role, involved in urease metallocenter assembly. Binds nickel. Probably functions as a nickel donor during metallocenter assembly. This is Urease accessory protein UreE from Bordetella parapertussis (strain 12822 / ATCC BAA-587 / NCTC 13253).